The primary structure comprises 323 residues: MIDFGNFYSLIAKNHLSHWLETLPAQIANWQREQQHGLFKQWSNAVEFLPEIKPYRLDLLHSVTAESEEPLSTGQIKRIETLMRNLMPWRKGPFSLYGVNIDTEWRSDWKWDRVLPHLSDLTGRTILDVGCGSGYHMWRMIGAGAHLAVGIDPTQLFLCQFEAVRKLLGNDQRAHLIPLGIEQLPALKAFDTVFSMGVLYHRRSPLEHLWQLKDQLVNEGELVLETLVIDGDENTVLVPGDRYAQMRNVYFIPSALALKNWLKKCGFVDIRIVDVCVTTTEEQRRTEWMVTESLSDFLDPHDPSKTVEGYPAPKRAVLIARKP.

Residues Lys-91, Trp-105, Lys-110, Gly-130, 152–154, 181–182, Met-196, Tyr-200, and Arg-315 each bind carboxy-S-adenosyl-L-methionine; these read DPT and IE.

The protein belongs to the class I-like SAM-binding methyltransferase superfamily. CmoB family. Homotetramer.

The enzyme catalyses carboxy-S-adenosyl-L-methionine + 5-hydroxyuridine(34) in tRNA = 5-carboxymethoxyuridine(34) in tRNA + S-adenosyl-L-homocysteine + H(+). Functionally, catalyzes carboxymethyl transfer from carboxy-S-adenosyl-L-methionine (Cx-SAM) to 5-hydroxyuridine (ho5U) to form 5-carboxymethoxyuridine (cmo5U) at position 34 in tRNAs. The sequence is that of tRNA U34 carboxymethyltransferase from Escherichia coli (strain SE11).